Reading from the N-terminus, the 295-residue chain is Ribosomal protein L11 methyltransferase (295 aa).

S-adenosyl-L-methionine-binding residues include T145, G166, D188, and N230.

Belongs to the methyltransferase superfamily. PrmA family.

Its subcellular location is the cytoplasm. It catalyses the reaction L-lysyl-[protein] + 3 S-adenosyl-L-methionine = N(6),N(6),N(6)-trimethyl-L-lysyl-[protein] + 3 S-adenosyl-L-homocysteine + 3 H(+). Its function is as follows. Methylates ribosomal protein L11. The chain is Ribosomal protein L11 methyltransferase from Shewanella amazonensis (strain ATCC BAA-1098 / SB2B).